We begin with the raw amino-acid sequence, 87 residues long: Large ribosomal subunit protein bL27 (87 aa).

This sequence belongs to the bacterial ribosomal protein bL27 family.

This Stenotrophomonas maltophilia (strain R551-3) protein is Large ribosomal subunit protein bL27.